The primary structure comprises 491 residues: Trypanothione reductase (491 aa).

Residue 35–51 participates in FAD binding; that stretch reads DLQKHHGPPHYAALGGT. C52 and C57 are joined by a disulfide. H461 functions as the Proton acceptor in the catalytic mechanism.

It belongs to the class-I pyridine nucleotide-disulfide oxidoreductase family. Homodimer. Requires FAD as cofactor. Post-translationally, the N-terminus is blocked.

The protein localises to the cytoplasm. It catalyses the reaction trypanothione + NADP(+) = trypanothione disulfide + NADPH + H(+). Its function is as follows. Trypanothione is the parasite analog of glutathione; this enzyme is the equivalent of glutathione reductase. This Crithidia fasciculata protein is Trypanothione reductase (TPR).